We begin with the raw amino-acid sequence, 214 residues long: Adenylate kinase (214 aa).

ATP is bound at residue 10-15; it reads GAGKGT. The tract at residues 30 to 59 is NMP; that stretch reads STGDMLRAAIKAGTELGNAAKRVMDEGKLV. AMP-binding positions include Thr31, Arg36, 57–59, 85–88, and Gln92; these read KLV and GFPR. Residues 122–159 form an LID region; the sequence is GRRVHPASGRVYHLQYNPPQNDGKDDETGEDLVIRADD. ATP contacts are provided by residues Arg123 and 132–133; that span reads VY. Residues Arg156 and Arg167 each contribute to the AMP site. Lys200 provides a ligand contact to ATP.

This sequence belongs to the adenylate kinase family. As to quaternary structure, monomer.

It is found in the cytoplasm. The catalysed reaction is AMP + ATP = 2 ADP. It participates in purine metabolism; AMP biosynthesis via salvage pathway; AMP from ADP: step 1/1. In terms of biological role, catalyzes the reversible transfer of the terminal phosphate group between ATP and AMP. Plays an important role in cellular energy homeostasis and in adenine nucleotide metabolism. The sequence is that of Adenylate kinase from Pseudoalteromonas atlantica (strain T6c / ATCC BAA-1087).